A 542-amino-acid chain; its full sequence is Putative leucine aminopeptidase 1 (542 aa).

2 residues coordinate Mn(2+): lysine 294 and aspartate 299. Lysine 323 is an active-site residue. Mn(2+) contacts are provided by aspartate 336, aspartate 396, and glutamate 398. Residue arginine 400 is part of the active site.

It belongs to the peptidase M17 family. As to quaternary structure, homohexamer (dimer of homotrimers). Mn(2+) serves as cofactor.

Its subcellular location is the cytoplasm. The enzyme catalyses Release of an N-terminal amino acid, Xaa-|-Yaa-, in which Xaa is preferably Leu, but may be other amino acids including Pro although not Arg or Lys, and Yaa may be Pro. Amino acid amides and methyl esters are also readily hydrolyzed, but rates on arylamides are exceedingly low.. It carries out the reaction Release of N-terminal proline from a peptide.. Presumably involved in the processing and regular turnover of intracellular proteins. Catalyzes the removal of unsubstituted N-terminal amino acids from various peptides. The polypeptide is Putative leucine aminopeptidase 1 (Oryza sativa subsp. japonica (Rice)).